Consider the following 139-residue polypeptide: 3-hydroxyacyl-[acyl-carrier-protein] dehydratase FabZ (139 aa).

Histidine 46 is an active-site residue.

Belongs to the thioester dehydratase family. FabZ subfamily.

It localises to the cytoplasm. The enzyme catalyses a (3R)-hydroxyacyl-[ACP] = a (2E)-enoyl-[ACP] + H2O. Its function is as follows. Involved in unsaturated fatty acids biosynthesis. Catalyzes the dehydration of short chain beta-hydroxyacyl-ACPs and long chain saturated and unsaturated beta-hydroxyacyl-ACPs. This is 3-hydroxyacyl-[acyl-carrier-protein] dehydratase FabZ from Petrotoga mobilis (strain DSM 10674 / SJ95).